A 417-amino-acid polypeptide reads, in one-letter code: Voltage-gated potassium channel Kch (417 aa).

Residues 1 to 21 (MSHWATFKQTATNLWVTLRHD) are Cytoplasmic-facing. A helical transmembrane segment spans residues 22–41 (ILALAVFLNGLLIFKTIYGM). Topologically, residues 42–63 (SVNLLDIFHIKAFSELDLSLLA) are periplasmic. The helical transmembrane segment at 64 to 83 (NAPLFMLGVFLVLNSIGLLF) threads the bilayer. Residues 84–86 (RAK) are Cytoplasmic-facing. A helical membrane pass occupies residues 87–104 (LAWAISIILLLIALIYTL). The Periplasmic portion of the chain corresponds to 105–110 (HFYPWL). The chain crosses the membrane as a helical span at residues 111–127 (KFSIGFCIFTLVFLLIL). Residues 128 to 140 (RKDFSHSSAAAGT) lie on the Cytoplasmic side of the membrane. A helical transmembrane segment spans residues 141-160 (IFAFISFTTLLFYSTYGALY). Residues 161–199 (LSEGFNPRIESLMTAFYFSIETMSTVGYGDIVPVSESAR) are Periplasmic-facing. The Selectivity filter motif lies at 185–190 (TVGYGD). Residues 200-220 (LFTISVIISGITVFATSMTSI) form a helical membrane-spanning segment. Residues 221–417 (FGPLIRGGFN…KADSKESAQK (197 aa)) lie on the Cytoplasmic side of the membrane. Residues 243-363 (KDHFIVCGHS…IKMVHPDIIL (121 aa)) enclose the RCK N-terminal domain.

It belongs to the potassium channel family. In terms of assembly, dimer.

It localises to the cell inner membrane. In terms of biological role, k(+)-specific ion channel. May play a role in the defense against osmotic shock. This Escherichia coli (strain K12) protein is Voltage-gated potassium channel Kch (kch).